The following is a 513-amino-acid chain: 2-isopropylmalate synthase (513 aa).

Residues 4 to 268 (IKIFDTTLRD…ETGIKTELIY (265 aa)) enclose the Pyruvate carboxyltransferase domain. Mn(2+) is bound by residues aspartate 13, histidine 203, histidine 205, and asparagine 239. A regulatory domain region spans residues 392–513 (KLVHFHVHTG…GLLRKNGGAE (122 aa)).

The protein belongs to the alpha-IPM synthase/homocitrate synthase family. LeuA type 1 subfamily. Homodimer. Requires Mn(2+) as cofactor.

The protein resides in the cytoplasm. It catalyses the reaction 3-methyl-2-oxobutanoate + acetyl-CoA + H2O = (2S)-2-isopropylmalate + CoA + H(+). It functions in the pathway amino-acid biosynthesis; L-leucine biosynthesis; L-leucine from 3-methyl-2-oxobutanoate: step 1/4. In terms of biological role, catalyzes the condensation of the acetyl group of acetyl-CoA with 3-methyl-2-oxobutanoate (2-ketoisovalerate) to form 3-carboxy-3-hydroxy-4-methylpentanoate (2-isopropylmalate). This chain is 2-isopropylmalate synthase, found in Thermotoga petrophila (strain ATCC BAA-488 / DSM 13995 / JCM 10881 / RKU-1).